The chain runs to 259 residues: L-cystine import ATP-binding protein TcyN (259 aa).

In terms of domain architecture, ABC transporter spans 2–239 (IEIKNIHKQF…TKKDRTRQFL (238 aa)). Residue 34–41 (GPSGSGKT) participates in ATP binding.

The protein belongs to the ABC transporter superfamily. L-cystine importer (TC 3.A.1.3.13) family. The complex is composed of two ATP-binding proteins (TcyN), two transmembrane proteins (TcyL and TcyM) and two solute-binding proteins (TcyJ and TcyK).

The protein localises to the cell membrane. Functionally, part of the ABC transporter complex TcyJKLMN involved in L-cystine import. Responsible for energy coupling to the transport system. Is also involved in cystathionine, djenkolate, and S-methylcysteine transport. This is L-cystine import ATP-binding protein TcyN (tcyN) from Bacillus subtilis (strain 168).